Here is a 426-residue protein sequence, read N- to C-terminus: Serine--tRNA ligase (426 aa).

An L-serine-binding site is contributed by 230-232 (TAE). 261–263 (RSE) serves as a coordination point for ATP. Glu284 serves as a coordination point for L-serine. 348 to 351 (EISS) serves as a coordination point for ATP. Ser384 lines the L-serine pocket.

The protein belongs to the class-II aminoacyl-tRNA synthetase family. Type-1 seryl-tRNA synthetase subfamily. In terms of assembly, homodimer. The tRNA molecule binds across the dimer.

Its subcellular location is the cytoplasm. The catalysed reaction is tRNA(Ser) + L-serine + ATP = L-seryl-tRNA(Ser) + AMP + diphosphate + H(+). It carries out the reaction tRNA(Sec) + L-serine + ATP = L-seryl-tRNA(Sec) + AMP + diphosphate + H(+). It functions in the pathway aminoacyl-tRNA biosynthesis; selenocysteinyl-tRNA(Sec) biosynthesis; L-seryl-tRNA(Sec) from L-serine and tRNA(Sec): step 1/1. In terms of biological role, catalyzes the attachment of serine to tRNA(Ser). Is also able to aminoacylate tRNA(Sec) with serine, to form the misacylated tRNA L-seryl-tRNA(Sec), which will be further converted into selenocysteinyl-tRNA(Sec). This chain is Serine--tRNA ligase, found in Erythrobacter litoralis (strain HTCC2594).